Reading from the N-terminus, the 130-residue chain is Small ribosomal subunit protein uS9 (130 aa).

The segment at 109–130 is disordered; that stretch reads RAKERKKYGLYGARRSPQFTKR.

It belongs to the universal ribosomal protein uS9 family.

The polypeptide is Small ribosomal subunit protein uS9 (Malacoplasma penetrans (strain HF-2) (Mycoplasma penetrans)).